The following is a 537-amino-acid chain: Pancreatic secretory granule membrane major glycoprotein GP2 (537 aa).

A signal peptide spans 1–28; that stretch reads MPHLMERMVGSGLLWLALVSCILTQASA. A beta hairpin region spans residues 41 to 60; that stretch reads SYGLDLDCGAPGTPEAHVCF. 11 disulfides stabilise this stretch: cysteine 48/cysteine 59, cysteine 63/cysteine 157, cysteine 85/cysteine 172, cysteine 107/cysteine 145, cysteine 113/cysteine 177, cysteine 138/cysteine 146, cysteine 190/cysteine 200, cysteine 194/cysteine 209, cysteine 211/cysteine 241, cysteine 229/cysteine 320, and cysteine 261/cysteine 284. Residues 61–81 form a D10C region; it reads DPCQNYTLLDEPFRSTENSAG. The N-linked (GlcNAc...) (high mannose) asparagine glycan is linked to asparagine 65. N-linked (GlcNAc...) asparagine glycosylation is found at asparagine 88, asparagine 122, and asparagine 134. The region spanning 186–230 is the EGF-like domain; the sequence is VEDKCEKACRPEEECLALNSTWGCFCRQDLNSSDVHSLQPQLDCG. Asparagine 204, asparagine 216, and asparagine 260 each carry an N-linked (GlcNAc...) asparagine glycan. Positions 228 to 321 are ZP-N; that stretch reads DCGPREIKVK…TILNINFQCA (94 aa). The ZP domain occupies 228-484; it reads DCGPREIKVK…PSCSRSQVRS (257 aa). N-linked (GlcNAc...) asparagine glycans are attached at residues asparagine 291 and asparagine 342. Residues 322 to 345 form a flexible ZP-N/ZP-C linker region; the sequence is YPLDMKVSLQAALQPIVSSLNVSV. The tract at residues 346 to 357 is internal hydrophobic patch (IHP); the sequence is DGNGEFIVRMAL. Residues 346–484 are ZP-C; that stretch reads DGNGEFIVRM…PSCSRSQVRS (139 aa). N-linked (GlcNAc...) asparagine glycosylation is present at asparagine 362. 3 disulfide bridges follow: cysteine 401-cysteine 461, cysteine 422-cysteine 477, and cysteine 466-cysteine 473. The tract at residues 491-499 is external hydrophobic patch (EHP); that stretch reads LARVLDLGP. Asparagine 512 carries the GPI-anchor amidated asparagine lipid modification. Residues 513-537 constitute a propeptide, removed in mature form; it reads GTPSTAGFLVAWPMVLLTVLLAWLF.

In terms of assembly, interacts with SYCN. Interacts with bacterial adhesin fimH. N-glycosylated. Glycosylated Asn-65 may be required for interaction with bacterial adhesin fimH. In terms of tissue distribution, expressed in pancreas (at protein level). Specifically expressed by M (microfold) cells which are atypical epithelial cells of the intestine (at protein level).

It localises to the zymogen granule membrane. Its subcellular location is the secreted. The protein localises to the cell membrane. It is found in the apical cell membrane. The protein resides in the membrane raft. It localises to the endosome. Its function is as follows. Functions as an intestinal M-cell transcytotic receptor specific for type-I-piliated bacteria that participates in the mucosal immune response toward these bacteria. At the apical membrane of M-cells it binds fimH, a protein of the bacteria type I pilus tip. Internalizes bound bacteria, like E.coli and S.typhimurium, from the lumen of the intestine and delivers them, through M-cells, to the underlying organized lymphoid follicles where they are captured by antigen-presenting dendritic cells to elicit a mucosal immune response. The protein is Pancreatic secretory granule membrane major glycoprotein GP2 of Homo sapiens (Human).